The chain runs to 59 residues: Large ribosomal subunit protein bL32 (59 aa).

Positions 1–59 (MAVQQNKKSPSKRGMHRSHDFLTTSPLAVEPSTGEVHLRHHISPNGYYRGKKVVKTKND) are disordered. The span at 49–59 (RGKKVVKTKND) shows a compositional bias: basic residues.

The protein belongs to the bacterial ribosomal protein bL32 family.

The protein is Large ribosomal subunit protein bL32 of Burkholderia mallei (strain NCTC 10247).